Here is a 171-residue protein sequence, read N- to C-terminus: Protein-export protein SecB (171 aa).

It belongs to the SecB family. In terms of assembly, homotetramer, a dimer of dimers. One homotetramer interacts with 1 SecA dimer.

Its subcellular location is the cytoplasm. Its function is as follows. One of the proteins required for the normal export of preproteins out of the cell cytoplasm. It is a molecular chaperone that binds to a subset of precursor proteins, maintaining them in a translocation-competent state. It also specifically binds to its receptor SecA. The sequence is that of Protein-export protein SecB from Jannaschia sp. (strain CCS1).